Consider the following 427-residue polypeptide: Histidine--tRNA ligase (427 aa).

It belongs to the class-II aminoacyl-tRNA synthetase family. As to quaternary structure, homodimer.

Its subcellular location is the cytoplasm. The enzyme catalyses tRNA(His) + L-histidine + ATP = L-histidyl-tRNA(His) + AMP + diphosphate + H(+). The protein is Histidine--tRNA ligase of Proteus mirabilis (strain HI4320).